A 252-amino-acid chain; its full sequence is 5'-methylthioadenosine/S-adenosylhomocysteine nucleosidase (252 aa).

The active-site Proton acceptor is the Glu20. Residues Gly86, Ile160, and 181–182 (ME) each bind substrate. Asp205 (proton donor) is an active-site residue.

This sequence belongs to the PNP/UDP phosphorylase family. MtnN subfamily. Homodimer.

It catalyses the reaction S-adenosyl-L-homocysteine + H2O = S-(5-deoxy-D-ribos-5-yl)-L-homocysteine + adenine. The enzyme catalyses S-methyl-5'-thioadenosine + H2O = 5-(methylsulfanyl)-D-ribose + adenine. It carries out the reaction 5'-deoxyadenosine + H2O = 5-deoxy-D-ribose + adenine. Its pathway is amino-acid biosynthesis; L-methionine biosynthesis via salvage pathway; S-methyl-5-thio-alpha-D-ribose 1-phosphate from S-methyl-5'-thioadenosine (hydrolase route): step 1/2. In terms of biological role, catalyzes the irreversible cleavage of the glycosidic bond in both 5'-methylthioadenosine (MTA) and S-adenosylhomocysteine (SAH/AdoHcy) to adenine and the corresponding thioribose, 5'-methylthioribose and S-ribosylhomocysteine, respectively. Also cleaves 5'-deoxyadenosine, a toxic by-product of radical S-adenosylmethionine (SAM) enzymes, into 5-deoxyribose and adenine. Thus, is required for in vivo function of the radical SAM enzymes biotin synthase and lipoic acid synthase, that are inhibited by 5'-deoxyadenosine accumulation. This Buchnera aphidicola subsp. Baizongia pistaciae (strain Bp) protein is 5'-methylthioadenosine/S-adenosylhomocysteine nucleosidase.